The chain runs to 181 residues: Interleukin-24 (181 aa).

Residues 1 to 26 form the signal peptide; that stretch reads MSWGLQILPCLSLILLLWNQVPGLEG. Cysteine 34 and cysteine 81 are disulfide-bonded. A glycan (N-linked (GlcNAc...) asparagine) is linked at asparagine 74. Lysine 97 participates in a covalent cross-link: Glycyl lysine isopeptide (Lys-Gly) (interchain with G-Cter in ubiquitin).

This sequence belongs to the IL-10 family. In terms of processing, glycosylated. Ubiquitination at Lys-97 promotes proteasomal degradation. As to expression, selectively expressed by Th2 cells. Expressed in the liver.

Its subcellular location is the secreted. Multifunctional cytokine mainly produced by T-cells that plays a regulatory role in immune response, tissue homeostasis, host defense, and oncogenesis. Possesses antiviral functions and induces the type I interferon response during influenza infection. Signals through two receptor complexes IL20RA/IL20RB or IL20RB/IL22RA1. In turn, stimulates the JAK1-STAT3 and MAPK pathways and promotes the secretion of pro-inflammatory mediators including IL8 and MMP1. Intracellularly, maintains endoplasmic reticulum homeostasis by restricting the eIF2alpha-CHOP pathway-mediated stress signal. In addition, acts as a quality control mechanism for the ubiquitin proteasome system by alerting the cell to proteasome dysfunction through activation of PKR/EIF2AK2. The polypeptide is Interleukin-24 (Il24) (Mus musculus (Mouse)).